We begin with the raw amino-acid sequence, 96 residues long: uncharacterized protein (96 aa).

Residues 38 to 91 (IEQLRKGTGLKIDDFARVLGVSVAMVKEWESRRVKPSSAELKLMRLIQANPALS) form the HTH cro/C1-type domain. A DNA-binding region (H-T-H motif) is located at residues 49–68 (IDDFARVLGVSVAMVKEWES).

This is an uncharacterized protein from Escherichia coli O157:H7.